A 397-amino-acid polypeptide reads, in one-letter code: tRNA-specific 2-thiouridylase MnmA (397 aa).

ATP is bound by residues A19–S26 and L45. Residue C113 is the Nucleophile of the active site. Cysteines 113 and 210 form a disulfide. Position 137 (G137) interacts with ATP. The interaction with tRNA stretch occupies residues R160–Q162. C210 functions as the Cysteine persulfide intermediate in the catalytic mechanism.

It belongs to the MnmA/TRMU family.

The protein resides in the cytoplasm. It catalyses the reaction S-sulfanyl-L-cysteinyl-[protein] + uridine(34) in tRNA + AH2 + ATP = 2-thiouridine(34) in tRNA + L-cysteinyl-[protein] + A + AMP + diphosphate + H(+). Catalyzes the 2-thiolation of uridine at the wobble position (U34) of tRNA, leading to the formation of s(2)U34. The chain is tRNA-specific 2-thiouridylase MnmA from Bradyrhizobium sp. (strain ORS 278).